A 475-amino-acid chain; its full sequence is Vitronectin (475 aa).

An N-terminal signal peptide occupies residues Met-1–Ala-19. An SMB domain is found at Asp-20–Thr-63. Disulfide bonds link Cys-24–Cys-28, Cys-24–Cys-40, Cys-28–Cys-58, Cys-38–Cys-40, Cys-38–Cys-51, Cys-44–Cys-50, and Cys-51–Cys-58. Positions Arg-64–Asp-66 match the Cell attachment site motif. Residue Thr-69 is modified to Phosphothreonine. A sulfotyrosine mark is found at Tyr-75, Tyr-78, and Tyr-80. An N-linked (GlcNAc...) asparagine glycan is attached at Asn-87. Residues Asn-87–Leu-123 form a disordered region. Polar residues predominate over residues Glu-95 to Leu-109. Hemopexin repeat units follow at residues Gly-158 to Ile-202, Glu-203 to Ile-250, and Pro-251 to Phe-305. Asn-169 and Asn-242 each carry an N-linked (GlcNAc...) asparagine glycan. Sulfotyrosine is present on residues Tyr-279 and Tyr-282. Residue Ser-312 is modified to Phosphoserine. Residues Leu-359–Arg-391 are disordered. Residues Lys-366–Arg-384 are compositionally biased toward basic residues. Positions Lys-366–Arg-392 are glycosaminoglycan binding region. Ser-394 bears the Phosphoserine mark. A Hemopexin 4 repeat occupies Thr-419–Cys-469.

Interacts with SERPINE1/PAI1 and C1QBP. Monomer. Sulfated on tyrosine residues. Post-translationally, N- and O-glycosylated. In terms of processing, it has been suggested that the active SMB domain may be permitted considerable disulfide bond heterogeneity or variability, thus two alternate disulfide patterns based on 3D structures are described with 1 disulfide bond conserved in both. As to expression, plasma.

The protein resides in the secreted. The protein localises to the extracellular space. Functionally, vitronectin is a cell adhesion and spreading factor found in serum and tissues. Vitronectin interact with glycosaminoglycans and proteoglycans. Is recognized by certain members of the integrin family and serves as a cell-to-substrate adhesion molecule. Inhibitor of the membrane-damaging effect of the terminal cytolytic complement pathway. This is Vitronectin (VTN) from Oryctolagus cuniculus (Rabbit).